The chain runs to 100 residues: Large ribosomal subunit protein bL21 (100 aa).

Belongs to the bacterial ribosomal protein bL21 family. In terms of assembly, part of the 50S ribosomal subunit. Contacts protein L20.

This protein binds to 23S rRNA in the presence of protein L20. The chain is Large ribosomal subunit protein bL21 from Mycoplasma mycoides subsp. mycoides SC (strain CCUG 32753 / NCTC 10114 / PG1).